The following is a 209-amino-acid chain: Imidazole glycerol phosphate synthase subunit HisH (209 aa).

The 205-residue stretch at 1–205 (MIAIIDYGMG…KGVVETWKSS (205 aa)) folds into the Glutamine amidotransferase type-1 domain. The Nucleophile role is filled by C79. Catalysis depends on residues H180 and E182.

As to quaternary structure, heterodimer of HisH and HisF.

Its subcellular location is the cytoplasm. It carries out the reaction 5-[(5-phospho-1-deoxy-D-ribulos-1-ylimino)methylamino]-1-(5-phospho-beta-D-ribosyl)imidazole-4-carboxamide + L-glutamine = D-erythro-1-(imidazol-4-yl)glycerol 3-phosphate + 5-amino-1-(5-phospho-beta-D-ribosyl)imidazole-4-carboxamide + L-glutamate + H(+). It catalyses the reaction L-glutamine + H2O = L-glutamate + NH4(+). It functions in the pathway amino-acid biosynthesis; L-histidine biosynthesis; L-histidine from 5-phospho-alpha-D-ribose 1-diphosphate: step 5/9. Functionally, IGPS catalyzes the conversion of PRFAR and glutamine to IGP, AICAR and glutamate. The HisH subunit catalyzes the hydrolysis of glutamine to glutamate and ammonia as part of the synthesis of IGP and AICAR. The resulting ammonia molecule is channeled to the active site of HisF. This chain is Imidazole glycerol phosphate synthase subunit HisH, found in Bacillus cereus (strain AH187).